A 236-amino-acid chain; its full sequence is 2,3,4,5-tetrahydropyridine-2,6-dicarboxylate N-acetyltransferase (236 aa).

This sequence belongs to the transferase hexapeptide repeat family. DapH subfamily.

The enzyme catalyses (S)-2,3,4,5-tetrahydrodipicolinate + acetyl-CoA + H2O = L-2-acetamido-6-oxoheptanedioate + CoA. Its pathway is amino-acid biosynthesis; L-lysine biosynthesis via DAP pathway; LL-2,6-diaminopimelate from (S)-tetrahydrodipicolinate (acetylase route): step 1/3. Its function is as follows. Catalyzes the transfer of an acetyl group from acetyl-CoA to tetrahydrodipicolinate. This Limosilactobacillus reuteri (strain DSM 20016) (Lactobacillus reuteri) protein is 2,3,4,5-tetrahydropyridine-2,6-dicarboxylate N-acetyltransferase.